Reading from the N-terminus, the 132-residue chain is Glycine cleavage system H protein (132 aa).

A Lipoyl-binding domain is found at 24-106 (IATIGLSAHA…YEEGWFIKVR (83 aa)). N6-lipoyllysine is present on K65.

Belongs to the GcvH family. In terms of assembly, the glycine cleavage system is composed of four proteins: P, T, L and H. The cofactor is (R)-lipoate.

The glycine cleavage system catalyzes the degradation of glycine. The H protein shuttles the methylamine group of glycine from the P protein to the T protein. The protein is Glycine cleavage system H protein of Picosynechococcus sp. (strain ATCC 27264 / PCC 7002 / PR-6) (Agmenellum quadruplicatum).